An 857-amino-acid polypeptide reads, in one-letter code: DNA mismatch repair protein MutS (857 aa).

608–615 (GPNMSGKS) contacts ATP.

This sequence belongs to the DNA mismatch repair MutS family.

In terms of biological role, this protein is involved in the repair of mismatches in DNA. It is possible that it carries out the mismatch recognition step. This protein has a weak ATPase activity. The protein is DNA mismatch repair protein MutS of Lactobacillus johnsonii (strain CNCM I-12250 / La1 / NCC 533).